A 685-amino-acid chain; its full sequence is Probable transcriptional regulator SLK3 (685 aa).

Disordered regions lie at residues 25–66 (NLPG…ENSY) and 108–129 (LQQQ…SQRL). Low complexity predominate over residues 39 to 56 (QHLPQQQQRQLLEQQAGQ). The segment at 176–423 (PAENCITYWR…EHKVGPLEGL (248 aa)) is dimerization. A Nuclear localization signal motif is present at residues 185 to 199 (RKFVAEYFSPRAKQR). Residues 447–459 (GNSGAMSGPAQAQ) show a composition bias toward polar residues. Disordered stretches follow at residues 447 to 491 (GNSG…MNGS), 512 to 591 (NNQN…NTQE), and 611 to 658 (QQQA…NNLP). Over residues 460–471 (MTLSSGTMSGST) the composition is skewed to low complexity. The segment covering 512–524 (NNQNSNTGNQEGF) has biased composition (polar residues). Residues 525–543 (SSQNPTLNSNQSPSSSSQQ) are compositionally biased toward low complexity. 3 stretches are compositionally biased toward polar residues: residues 544–588 (RENL…SHGN), 611–636 (QQQA…TSNI), and 645–658 (RINS…NNLP).

It belongs to the adn1/SEU family.

The protein localises to the nucleus. In terms of biological role, probable transcription regulator that functions in the development of the carpel margin meristem similarly to SEUSS (SEU). In association with SEU, supports organ development from meristematic regions by facilitating auxin response and thus organ initiation, and by sustaining meristematic potential through the maintenance of PHABULOSA expression. The chain is Probable transcriptional regulator SLK3 (SLK3) from Arabidopsis thaliana (Mouse-ear cress).